The sequence spans 95 residues: Embryonic abundant protein 1 (95 aa).

Polar residues predominate over residues 1–10 (MASGQQQQGR). Positions 1 to 95 (MASGQQQQGR…IDESKYKTKS (95 aa)) are disordered. 2 stretches are compositionally biased toward basic and acidic residues: residues 40-64 (AEGR…EMGR) and 75-95 (GGER…KTKS).

The protein belongs to the small hydrophilic plant seed protein family. In terms of tissue distribution, expressed in dry seeds and immature embryos.

Functionally, em protein may act as a cytoplasm protectant during desiccation. The chain is Embryonic abundant protein 1 (EMP1) from Oryza sativa subsp. japonica (Rice).